The chain runs to 260 residues: Alpha-acetolactate decarboxylase (260 aa).

It belongs to the alpha-acetolactate decarboxylase family.

The enzyme catalyses (2S)-2-acetolactate + H(+) = (R)-acetoin + CO2. Its pathway is polyol metabolism; (R,R)-butane-2,3-diol biosynthesis; (R,R)-butane-2,3-diol from pyruvate: step 2/3. In terms of biological role, converts acetolactate into acetoin. The protein is Alpha-acetolactate decarboxylase (budA) of Methylococcus capsulatus (strain ATCC 33009 / NCIMB 11132 / Bath).